The primary structure comprises 214 residues: Pyridoxine/pyridoxamine 5'-phosphate oxidase (214 aa).

Substrate is bound by residues 11–14 (RREY) and Lys-68. FMN-binding positions include 63–68 (RLVLLK), 78–79 (FT), Arg-84, Lys-85, and Gln-107. Residues Tyr-125 and Arg-129 each coordinate substrate. FMN is bound by residues 142–143 (QS) and Trp-187. 193–195 (RLH) is a substrate binding site. Arg-197 is a binding site for FMN.

This sequence belongs to the pyridoxamine 5'-phosphate oxidase family. In terms of assembly, homodimer. The cofactor is FMN.

It carries out the reaction pyridoxamine 5'-phosphate + O2 + H2O = pyridoxal 5'-phosphate + H2O2 + NH4(+). It catalyses the reaction pyridoxine 5'-phosphate + O2 = pyridoxal 5'-phosphate + H2O2. The protein operates within cofactor metabolism; pyridoxal 5'-phosphate salvage; pyridoxal 5'-phosphate from pyridoxamine 5'-phosphate: step 1/1. It functions in the pathway cofactor metabolism; pyridoxal 5'-phosphate salvage; pyridoxal 5'-phosphate from pyridoxine 5'-phosphate: step 1/1. Its function is as follows. Catalyzes the oxidation of either pyridoxine 5'-phosphate (PNP) or pyridoxamine 5'-phosphate (PMP) into pyridoxal 5'-phosphate (PLP). This chain is Pyridoxine/pyridoxamine 5'-phosphate oxidase, found in Blochmanniella floridana.